A 267-amino-acid chain; its full sequence is Cell division protein FtsQ (267 aa).

The Cytoplasmic portion of the chain corresponds to 1-32 (MRKKTSSNKKNTAKKNNNISLHRKLGLIYKKT). Residues 33–53 (ILILKIVLIIFICLFAFTKYF) form a helical membrane-spanning segment. Over 54–267 (ASLKSYLKTN…DKNKYYIEKY (214 aa)) the chain is Periplasmic. The region spanning 73–141 (FKLENVIIEG…STIYIKLFER (69 aa)) is the POTRA domain.

Belongs to the FtsQ/DivIB family. FtsQ subfamily.

The protein localises to the cell inner membrane. Essential cell division protein. The polypeptide is Cell division protein FtsQ (Rickettsia bellii (strain RML369-C)).